A 299-amino-acid polypeptide reads, in one-letter code: Protoheme IX farnesyltransferase 1 (299 aa).

Helical transmembrane passes span 24–44, 46–66, 97–117, 118–138, 146–166, 170–190, 217–237, 239–259, and 278–298; these read VVALIVFCAVIGMFLASPGVP, AAVVVPATLGIALVAGAAAMV, LLVALAVGGMGLALLLACCNA, LTAWLTLGTFVGYAIVYTLLL, IVIGGASGAMPPVLGWTAVNG, AFALALFLIIYTWTPPHFWAL, LSIVLYGFLLTAVTLLPVALG, AGAIYLGAVLLLDGRLLFLAV, and IWYLTWLFAALLLDHYYLIPL.

It belongs to the UbiA prenyltransferase family. Protoheme IX farnesyltransferase subfamily.

It localises to the cell inner membrane. It carries out the reaction heme b + (2E,6E)-farnesyl diphosphate + H2O = Fe(II)-heme o + diphosphate. The protein operates within porphyrin-containing compound metabolism; heme O biosynthesis; heme O from protoheme: step 1/1. In terms of biological role, converts heme B (protoheme IX) to heme O by substitution of the vinyl group on carbon 2 of heme B porphyrin ring with a hydroxyethyl farnesyl side group. This Chromobacterium violaceum (strain ATCC 12472 / DSM 30191 / JCM 1249 / CCUG 213 / NBRC 12614 / NCIMB 9131 / NCTC 9757 / MK) protein is Protoheme IX farnesyltransferase 1.